The primary structure comprises 119 residues: Large ribosomal subunit protein uL22 (119 aa).

The protein belongs to the universal ribosomal protein uL22 family. As to quaternary structure, part of the 50S ribosomal subunit.

In terms of biological role, this protein binds specifically to 23S rRNA; its binding is stimulated by other ribosomal proteins, e.g. L4, L17, and L20. It is important during the early stages of 50S assembly. It makes multiple contacts with different domains of the 23S rRNA in the assembled 50S subunit and ribosome. Its function is as follows. The globular domain of the protein is located near the polypeptide exit tunnel on the outside of the subunit, while an extended beta-hairpin is found that lines the wall of the exit tunnel in the center of the 70S ribosome. The chain is Large ribosomal subunit protein uL22 from Rickettsia akari (strain Hartford).